Reading from the N-terminus, the 373-residue chain is Queuine tRNA-ribosyltransferase (373 aa).

The Proton acceptor role is filled by Asp-91. Substrate is bound by residues 91 to 95 (DSGGF), Asp-145, and Gln-187. The tract at residues 245–251 (GVGTPED) is RNA binding. The active-site Nucleophile is Asp-264. Residues 269-273 (TRNAR) are RNA binding; important for wobble base 34 recognition. Residues Cys-302, Cys-304, Cys-307, and His-333 each contribute to the Zn(2+) site.

Belongs to the queuine tRNA-ribosyltransferase family. Homodimer. Within each dimer, one monomer is responsible for RNA recognition and catalysis, while the other monomer binds to the replacement base PreQ1. The cofactor is Zn(2+).

The catalysed reaction is 7-aminomethyl-7-carbaguanine + guanosine(34) in tRNA = 7-aminomethyl-7-carbaguanosine(34) in tRNA + guanine. The protein operates within tRNA modification; tRNA-queuosine biosynthesis. Functionally, catalyzes the base-exchange of a guanine (G) residue with the queuine precursor 7-aminomethyl-7-deazaguanine (PreQ1) at position 34 (anticodon wobble position) in tRNAs with GU(N) anticodons (tRNA-Asp, -Asn, -His and -Tyr). Catalysis occurs through a double-displacement mechanism. The nucleophile active site attacks the C1' of nucleotide 34 to detach the guanine base from the RNA, forming a covalent enzyme-RNA intermediate. The proton acceptor active site deprotonates the incoming PreQ1, allowing a nucleophilic attack on the C1' of the ribose to form the product. After dissociation, two additional enzymatic reactions on the tRNA convert PreQ1 to queuine (Q), resulting in the hypermodified nucleoside queuosine (7-(((4,5-cis-dihydroxy-2-cyclopenten-1-yl)amino)methyl)-7-deazaguanosine). The chain is Queuine tRNA-ribosyltransferase from Syntrophobacter fumaroxidans (strain DSM 10017 / MPOB).